A 910-amino-acid polypeptide reads, in one-letter code: DNA mismatch repair protein MutS (910 aa).

Over residues 1 to 15 (MPRSAAQSEEQTLQG) the composition is skewed to polar residues. The interval 1–94 (MPRSAAQSEE…EPAWAHHSQV (94 aa)) is disordered. A compositionally biased stretch (low complexity) spans 44–54 (DASLSADAAAR). 726 to 733 (GPNASGKS) contacts ATP.

This sequence belongs to the DNA mismatch repair MutS family.

This protein is involved in the repair of mismatches in DNA. It is possible that it carries out the mismatch recognition step. This protein has a weak ATPase activity. The protein is DNA mismatch repair protein MutS of Synechococcus sp. (strain WH7803).